A 754-amino-acid polypeptide reads, in one-letter code: Condensin complex subunit 2 (754 aa).

A disordered region spans residues 104–149 (LAQRKTNGASNGDDSNGGNGEGLGGDSDEANIEIDPLTGMPISNDP). The span at 118-128 (SNGGNGEGLGG) shows a compositional bias: gly residues. Phosphoserine is present on Ser245. A disordered region spans residues 359 to 379 (CYPDENHDNTSHDEQDDDNVN). The segment covering 362 to 371 (DENHDNTSHD) has biased composition (basic and acidic residues). Ser548 carries the phosphoserine modification. A disordered region spans residues 665–688 (HDSRKNREQSSNDSETHTEDESTK).

This sequence belongs to the CND2 (condensin subunit 2) family. Component of the condensin complex, which contains the SMC2 and SMC4 heterodimer, and three non SMC subunits that probably regulate the complex: BRN1, YCS4 and YCG1/YCS5.

It localises to the nucleus. It is found in the cytoplasm. Its subcellular location is the chromosome. Regulatory subunit of the condensin complex, a complex required for conversion of interphase chromatin into mitotic-like condense chromosomes. The condensin complex probably introduces positive supercoils into relaxed DNA in the presence of type I topoisomerases and converts nicked DNA into positive knotted forms in the presence of type II topoisomerases. The condensin complex probably also plays a role during interphase. This is Condensin complex subunit 2 (BRN1) from Saccharomyces cerevisiae (strain ATCC 204508 / S288c) (Baker's yeast).